The sequence spans 200 residues: Signal peptidase complex catalytic subunit SEC11 (200 aa).

Residues 1 to 15 (MFAELAPYLSNPRQT) lie on the Cytoplasmic side of the membrane. A helical; Signal-anchor for type II membrane protein membrane pass occupies residues 16–33 (LAQLLNFALVLSTAFMGW). The Lumenal portion of the chain corresponds to 34–200 (KALSVYTNSS…MGVMVMLQRE (167 aa)). Asn-41 carries N-linked (GlcNAc...) asparagine glycosylation. Active-site charge relay system residues include Ser-53 and His-92. The segment at 101–134 (GDGGKKSQRRLEREADKRSGPGLSSPVSHQMLTK) is disordered. Over residues 103–119 (GGKKSQRRLEREADKRS) the composition is skewed to basic and acidic residues. The active-site Charge relay system is the Asp-142. Positions 186-197 (VLLGIMGVMVML) are C-terminal short (CTS) helix.

This sequence belongs to the peptidase S26B family. As to quaternary structure, component of the signal peptidase complex (SPC) composed of a catalytic subunit SEC11 and three accessory subunits SPC1, SPC2 and SPC3. The complex induces a local thinning of the ER membrane which is used to measure the length of the signal peptide (SP) h-region of protein substrates. This ensures the selectivity of the complex towards h-regions shorter than 18-20 amino acids. SPC associates with the translocon complex.

It localises to the endoplasmic reticulum membrane. The catalysed reaction is Cleavage of hydrophobic, N-terminal signal or leader sequences from secreted and periplasmic proteins.. Functionally, catalytic component of the signal peptidase complex (SPC) which catalyzes the cleavage of N-terminal signal sequences from nascent proteins as they are translocated into the lumen of the endoplasmic reticulum. Specifically cleaves N-terminal signal peptides that contain a hydrophobic alpha-helix (h-region) shorter than 18-20 amino acids. The chain is Signal peptidase complex catalytic subunit SEC11 (SEC11) from Arthroderma benhamiae (strain ATCC MYA-4681 / CBS 112371) (Trichophyton mentagrophytes).